Here is a 1549-residue protein sequence, read N- to C-terminus: ATP-binding cassette sub-family C member 9 (1549 aa).

Over 1-30 (MSLSFCGNNISSYNINDGVLQNSCFVDALN) the chain is Extracellular. A glycan (N-linked (GlcNAc...) asparagine) is linked at N9. The helical transmembrane segment at 31–51 (LVPHVFLLFITFPILFIGWGS) threads the bilayer. At 52-72 (QSSKVQIHHNTWLHFPGHNLR) the chain is on the cytoplasmic side. Residues 73 to 93 (WILTFALLFVHVCEIAEGIVS) form a helical membrane-spanning segment. The Extracellular segment spans residues 94-101 (DSRRESRH). A helical transmembrane segment spans residues 102–122 (LHLFMPAVMGFVATTTSIVYY). Topologically, residues 123–132 (HNIETSNFPK) are cytoplasmic. A helical transmembrane segment spans residues 133-153 (LLLALFLYWVMAFITKTIKLV). Over 154–167 (KYCQSGLDISNLRF) the chain is Extracellular. The helical transmembrane segment at 168–188 (CITGMMVILNGLLMAVEINVI) threads the bilayer. Residues 189–301 (RVRRYVFFMN…AFGRPILLSS (113 aa)) lie on the Cytoplasmic side of the membrane. The region spanning 297 to 597 (ILLSSTFRYL…LSTVVRFAVK (301 aa)) is the ABC transmembrane type-1 1 domain. Residues 302–322 (TFRYLADLLGFAGPLCISGIV) traverse the membrane as a helical segment. Residues 323–350 (QRVNETQNGTNNTTGISETLSSKEFLEN) are Extracellular-facing. N326, N330, N333, and N334 each carry an N-linked (GlcNAc...) asparagine glycan. A helical transmembrane segment spans residues 351–371 (AYVLAVLLFLALILQRTFLQA). Residues 372–423 (SYYVTIETGINLRGALLAMIYNKILRLSTSNLSMGEMTLGQINNLVAIETNQ) are Cytoplasmic-facing. Residues 424–444 (LMWFLFLCPNLWAMPVQIIMG) traverse the membrane as a helical segment. At 445–455 (VILLYNLLGSS) the chain is on the extracellular side. Residues 456 to 476 (ALVGAAVIVLLAPIQYFIATK) form a helical membrane-spanning segment. The Cytoplasmic portion of the chain corresponds to 477-531 (LAEAQKSTLDYSTERLKKTNEILKGIKLLKLYAWEHIFCKSVEETRMKELSSLKT). The helical transmembrane segment at 532-552 (FALYTSLSIFMNAAIPIAAVL) threads the bilayer. Topologically, residues 553 to 571 (ATFVTHAYASGNNLKPAEA) are extracellular. Residues 572 to 592 (FASLSLFHILVTPLFLLSTVV) form a helical membrane-spanning segment. Over 593-990 (RFAVKAIISV…TCWRYLTSGG (398 aa)) the chain is Cytoplasmic. The region spanning 672-912 (IKVTNGYFSW…DVELYEHWKT (241 aa)) is the ABC transporter 1 domain. 705–712 (GQVGCGKS) is a binding site for ATP. The disordered stretch occupies residues 944 to 967 (REAKAQMEDEDEEEEEEEDEDDNM). The span at 951–966 (EDEDEEEEEEEDEDDN) shows a compositional bias: acidic residues. Residues 991 to 1011 (FFLLILMIFSKLLKHSVIVAI) form a helical membrane-spanning segment. The ABC transmembrane type-1 2 domain occupies 994 to 1274 (LILMIFSKLL…VVRNLADLEV (281 aa)). Residues 1012 to 1034 (DYWLATWTSEYSINNTGKADQTY) lie on the Extracellular side of the membrane. Residues 1035-1055 (YVAGFSILCGAGIFLCLVTSL) form a helical membrane-spanning segment. Over 1056-1127 (TVEWMGLTAA…TLLCLSAIGM (72 aa)) the chain is Cytoplasmic. The helical transmembrane segment at 1128-1148 (ISYATPVFLVALLPLGVAFYF) threads the bilayer. Residues 1149–1245 (IQKYFRVASK…IASISGSSNS (97 aa)) are Extracellular-facing. The helical transmembrane segment at 1246 to 1266 (GLVGLGLLYALTITNYLNWVV) threads the bilayer. Residues 1267 to 1549 (RNLADLEVQM…LFSTLVMTNK (283 aa)) are Cytoplasmic-facing. The ABC transporter 2 domain maps to 1312-1546 (IKIHDLCVRY…KNGLFSTLVM (235 aa)). 1346–1353 (GRTGSGKS) is an ATP binding site.

This sequence belongs to the ABC transporter superfamily. ABCC family. Conjugate transporter (TC 3.A.1.208) subfamily. Interacts with KCNJ11. Interacts with KCNJ8.

Its subcellular location is the membrane. Subunit of ATP-sensitive potassium channels (KATP). Can form cardiac and smooth muscle-type KATP channels with KCNJ11. KCNJ11 forms the channel pore while ABCC9 is required for activation and regulation. Can form a sulfonylurea-sensitive but ATP-insensitive potassium channel with KCNJ8. This chain is ATP-binding cassette sub-family C member 9 (ABCC9), found in Homo sapiens (Human).